The chain runs to 735 residues: Peroxisomal multifunctional enzyme type 2 (735 aa).

Residues 1 to 305 (MASPLRFDGR…IEVLHKIDSE (305 aa)) are (3R)-hydroxyacyl-CoA dehydrogenase. Residues 16–40 (GAGGGLGRAYALAFAERGALVVVND), Leu-21, and Asp-40 each bind NAD(+). The residue at position 46 (Lys-46) is an N6-acetyllysine; alternate. Position 46 is an N6-succinyllysine; alternate (Lys-46). Phosphoserine is present on Ser-52. Lys-57 and Lys-68 each carry N6-succinyllysine. 75–76 (SV) contacts NAD(+). Lys-84 is subject to N6-succinyllysine. Position 99 (Asn-99) interacts with NAD(+). Ser-151 is a substrate binding site. Tyr-164 serves as the catalytic Proton acceptor. NAD(+) contacts are provided by residues 164–168 (YSAAK) and 196–199 (AGSR). The residue at position 265 (Thr-265) is a Phosphothreonine. Lys-275 bears the N6-succinyllysine mark. Ser-304 and Ser-308 each carry phosphoserine. The interval 321–621 (SGFAGVVGHK…AQTPSEGGAL (301 aa)) is enoyl-CoA hydratase 2. Lys-355 carries the N6-succinyllysine modification. 405–406 (HG) contributes to the (3R)-3-hydroxydecanoyl-CoA binding site. Lys-423 is subject to N6-succinyllysine. Residues Lys-434, 509-514 (DSNPLH), Gly-532, and Phe-562 contribute to the (3R)-3-hydroxydecanoyl-CoA site. The MaoC-like domain maps to 483-599 (VPSRPPDAVL…QETGDIVISN (117 aa)). Lys-564 carries the N6-acetyllysine modification. Residues Lys-578 and Lys-662 each carry the N6-succinyllysine modification. Residues 623–735 (SALVFGEIGR…QMILKDYAKL (113 aa)) enclose the SCP2 domain. An N6-acetyllysine modification is found at Lys-668. Substrate-binding residues include Gln-705 and Gln-723. An N6-succinyllysine modification is found at Lys-724. The Microbody targeting signal signature appears at 733–735 (AKL).

This sequence belongs to the short-chain dehydrogenases/reductases (SDR) family. In terms of assembly, homodimer.

It localises to the peroxisome. The catalysed reaction is a (3R)-3-hydroxyacyl-CoA + NAD(+) = a 3-oxoacyl-CoA + NADH + H(+). It catalyses the reaction (24R,25R)-3alpha,7alpha,12alpha,24-tetrahydroxy-5beta-cholestan-26-oyl-CoA = (24E)-3alpha,7alpha,12alpha-trihydroxy-5beta-cholest-24-en-26-oyl-CoA + H2O. It carries out the reaction a (3R)-3-hydroxyacyl-CoA = a (2E)-enoyl-CoA + H2O. The enzyme catalyses (2E)-octenoyl-CoA + H2O = (3R)-hydroxyoctanoyl-CoA. The catalysed reaction is (3R)-hydroxyoctanoyl-CoA + NAD(+) = 3-oxooctanoyl-CoA + NADH + H(+). It catalyses the reaction (3R)-hydroxyhexadecanoyl-CoA + NAD(+) = 3-oxohexadecanoyl-CoA + NADH + H(+). It carries out the reaction (2E)-hexadecenedioyl-CoA + H2O = (3R)-hydroxyhexadecanedioyl-CoA. The enzyme catalyses (3R)-hydroxyhexadecanedioyl-CoA + NAD(+) = 3-oxohexadecanedioyl-CoA + NADH + H(+). The catalysed reaction is (3R)-hydroxyhexadecanoyl-CoA = (2E)-hexadecenoyl-CoA + H2O. It catalyses the reaction (3R)-3-hydroxydecanoyl-CoA = (2E)-decenoyl-CoA + H2O. It carries out the reaction (3R)-3-hydroxydecanoyl-CoA + NAD(+) = 3-oxodecanoyl-CoA + NADH + H(+). The enzyme catalyses (24R,25R)-3alpha,7alpha,12alpha,24-tetrahydroxy-5beta-cholestan-26-oyl-CoA + NAD(+) = 3alpha,7alpha,12alpha-trihydroxy-24-oxo-5beta-cholestan-26-oyl-CoA + NADH + H(+). Its pathway is lipid metabolism; fatty acid beta-oxidation. Its function is as follows. Bifunctional enzyme acting on the peroxisomal fatty acid beta-oxidation pathway. Catalyzes two of the four reactions in fatty acid degradation: hydration of 2-enoyl-CoA (trans-2-enoyl-CoA) to produce (3R)-3-hydroxyacyl-CoA, and dehydrogenation of (3R)-3-hydroxyacyl-CoA to produce 3-ketoacyl-CoA (3-oxoacyl-CoA), which is further metabolized by SCPx. Can use straight-chain and branched-chain fatty acids, as well as bile acid intermediates as substrates. This is Peroxisomal multifunctional enzyme type 2 from Rattus norvegicus (Rat).